The chain runs to 785 residues: Protein translocase subunit SecA 3 (785 aa).

Residues Gln-98, 116-120, and Asp-505 each bind ATP; that span reads GEGKT.

This sequence belongs to the SecA family. In terms of assembly, monomer and homodimer. Part of the essential Sec protein translocation apparatus which comprises SecA, SecYEG and auxiliary proteins SecDF. Other proteins may also be involved.

The protein localises to the cell membrane. Its subcellular location is the cytoplasm. The enzyme catalyses ATP + H2O + cellular proteinSide 1 = ADP + phosphate + cellular proteinSide 2.. In terms of biological role, part of the Sec protein translocase complex. Interacts with the SecYEG preprotein conducting channel. Has a central role in coupling the hydrolysis of ATP to the transfer of proteins into and across the cell membrane, serving as an ATP-driven molecular motor driving the stepwise translocation of polypeptide chains across the membrane. The sequence is that of Protein translocase subunit SecA 3 from Mycolicibacterium vanbaalenii (strain DSM 7251 / JCM 13017 / BCRC 16820 / KCTC 9966 / NRRL B-24157 / PYR-1) (Mycobacterium vanbaalenii).